Here is a 120-residue protein sequence, read N- to C-terminus: Seripauperin-4 (120 aa).

Residues 7–24 traverse the membrane as a helical segment; sequence IAAGVAAIAATASATTTI.

This sequence belongs to the SRP1/TIP1 family. Seripauperin subfamily.

It localises to the membrane. The protein is Seripauperin-4 (PAU4) of Saccharomyces cerevisiae (strain ATCC 204508 / S288c) (Baker's yeast).